A 258-amino-acid chain; its full sequence is Transmembrane O-methyltransferase homolog (258 aa).

Residues glutamate 104, 106 to 107, serine 112, glutamate 130, and serine 160 each bind S-adenosyl-L-methionine; that span reads GT.

Belongs to the class I-like SAM-binding methyltransferase superfamily. Cation-dependent O-methyltransferase family. As to quaternary structure, interacts with LHFPL5, PCDH15, TMC1, TMC2 and TMIE. The interaction of TOMT with TMC1 and TMC2 is required for the transportation of TMC1/2 into the stereocilia of hair cells. Interacts directly with TMC1. As to expression, widely expressed with high levels in outer and inner hair cells of the cochlea and vestibule.

The protein localises to the cytoplasm. The protein resides in the endoplasmic reticulum. It catalyses the reaction a catechol + S-adenosyl-L-methionine = a guaiacol + S-adenosyl-L-homocysteine + H(+). In terms of biological role, catalyzes the O-methylation, and thereby the inactivation, of catecholamine neurotransmitters and catechol hormones. Required for auditory function. Component of the cochlear hair cell's mechanotransduction (MET) machinery. Involved in the assembly of the asymmetric tip-link MET complex. Required for transportation of TMC1 and TMC2 proteins into the mechanically sensitive stereocilia of the hair cells. The function in MET is independent of the enzymatic activity. This Mus musculus (Mouse) protein is Transmembrane O-methyltransferase homolog.